The primary structure comprises 507 residues: Rho GTPase-activating protein 19 (507 aa).

Positions 112 to 305 (APLTEEGIAQ…FMIKHSQKLF (194 aa)) constitute a Rho-GAP domain. Disordered regions lie at residues 344-371 (FLKHSKRSRLGSSPSSSTSLQEQTQQHT), 400-419 (KNTPRTPVSDTQVPNGKKHV), and 483-507 (DLQIRKEASSKSKKSHHKSTQETSI). Residues 355–369 (SSPSSSTSLQEQTQQ) are compositionally biased toward low complexity. Residues 400–413 (KNTPRTPVSDTQVP) show a composition bias toward polar residues. Residues 483–492 (DLQIRKEASS) show a composition bias toward basic and acidic residues.

GTPase activator for the Rho-type GTPases by converting them to an inactive GDP-bound state. The polypeptide is Rho GTPase-activating protein 19 (arhgap19) (Xenopus laevis (African clawed frog)).